We begin with the raw amino-acid sequence, 518 residues long: Glutamate--cysteine ligase (518 aa).

It belongs to the glutamate--cysteine ligase type 1 family. Type 1 subfamily.

The enzyme catalyses L-cysteine + L-glutamate + ATP = gamma-L-glutamyl-L-cysteine + ADP + phosphate + H(+). The protein operates within sulfur metabolism; glutathione biosynthesis; glutathione from L-cysteine and L-glutamate: step 1/2. This Shigella sonnei (strain Ss046) protein is Glutamate--cysteine ligase.